A 191-amino-acid polypeptide reads, in one-letter code: GTP cyclohydrolase 1 (191 aa).

The Zn(2+) site is built by cysteine 80, histidine 83, and cysteine 151.

This sequence belongs to the GTP cyclohydrolase I family. As to quaternary structure, toroid-shaped homodecamer, composed of two pentamers of five dimers.

The catalysed reaction is GTP + H2O = 7,8-dihydroneopterin 3'-triphosphate + formate + H(+). The protein operates within cofactor biosynthesis; 7,8-dihydroneopterin triphosphate biosynthesis; 7,8-dihydroneopterin triphosphate from GTP: step 1/1. This Nitrosospira multiformis (strain ATCC 25196 / NCIMB 11849 / C 71) protein is GTP cyclohydrolase 1.